Reading from the N-terminus, the 216-residue chain is Protein Syd (216 aa).

Belongs to the Syd family.

Its subcellular location is the cell inner membrane. Interacts with the SecY protein in vivo. May bind preferentially to an uncomplexed state of SecY, thus functioning either as a chelating agent for excess SecY in the cell or as a regulatory factor that negatively controls the translocase function. The sequence is that of Protein Syd from Shewanella baltica (strain OS223).